Reading from the N-terminus, the 230-residue chain is Large ribosomal subunit protein uL4 (230 aa).

The segment at 59-113 is disordered; the sequence is RQGTHATKTRGEVSGGGKKPYRQKGTGRARQGSTRAPQFTGGGTVHGPQPRDYSQ.

It belongs to the universal ribosomal protein uL4 family. In terms of assembly, part of the 50S ribosomal subunit.

Its function is as follows. One of the primary rRNA binding proteins, this protein initially binds near the 5'-end of the 23S rRNA. It is important during the early stages of 50S assembly. It makes multiple contacts with different domains of the 23S rRNA in the assembled 50S subunit and ribosome. Functionally, forms part of the polypeptide exit tunnel. In Nocardia farcinica (strain IFM 10152), this protein is Large ribosomal subunit protein uL4.